Reading from the N-terminus, the 344-residue chain is Melanocyte-stimulating hormone receptor (344 aa).

Topologically, residues 1–37 are extracellular; the sequence is MPMQGAQRKLLGSLNSTPTATSNLGLAANHTGAPCLE. N29 carries N-linked (GlcNAc...) asparagine glycosylation. Residues 38-63 traverse the membrane as a helical segment; the sequence is VPIPDGLFLSLGLVSLVENVLVVAAI. The Cytoplasmic segment spans residues 64–72; sequence AKNRNLHSS. The helical transmembrane segment at 73–93 threads the bilayer; sequence MYCFICCLAVSDLLVSGSNML. The Extracellular portion of the chain corresponds to 94–118; sequence ETAIILLLEAGALVTRASVVQQLHN. Residues 119–140 traverse the membrane as a helical segment; sequence TIDVLTCSSMLCSLCFLGAIAV. Residues 141–163 are Cytoplasmic-facing; the sequence is DRYISIFYALRYHSIMTLPRAQR. A helical transmembrane segment spans residues 164-183; it reads AIAAIWVASVLSSTLFITYY. The Extracellular portion of the chain corresponds to 184 to 191; sequence DHAAVLLC. A helical membrane pass occupies residues 192–211; that stretch reads LVVFFLAMLVLMAVLYVHML. The Cytoplasmic portion of the chain corresponds to 212–240; it reads ARACQHAQGIIRLHKRQPPAHKGFGLRGA. The helical transmembrane segment at 241-266 threads the bilayer; it reads ATLTILLGIFFLCWGPFFLHLTLVVF. Residues 267 to 279 lie on the Extracellular side of the membrane; that stretch reads CPQHMTCSCIFKN. The chain crosses the membrane as a helical span at residues 280–300; sequence FKVFLTLIICNTIIDPLIYAF. The Cytoplasmic segment spans residues 301-344; it reads RSQELRRTLKEVLLCSRWPGCWAEGGGDSVWPGSCVTLRGPLPP. A lipid anchor (S-palmitoyl cysteine) is attached at C315.

Belongs to the G-protein coupled receptor 1 family. In terms of assembly, interacts with MGRN1, but does not undergo MGRN1-mediated ubiquitination; this interaction competes with GNAS-binding and thus inhibits agonist-induced cAMP production. Interacts with OPN3; the interaction results in a decrease in MC1R-mediated cAMP signaling and ultimately a decrease in melanin production in melanocytes.

Its subcellular location is the cell membrane. Receptor for MSH (alpha, beta and gamma) and ACTH. The activity of this receptor is mediated by G proteins which activate adenylate cyclase. Mediates melanogenesis, the production of eumelanin (black/brown) and phaeomelanin (red/yellow), via regulation of cAMP signaling in melanocytes. In Callimico goeldii (Goeldi's marmoset), this protein is Melanocyte-stimulating hormone receptor (MC1R).